A 378-amino-acid polypeptide reads, in one-letter code: Probable endopolygalacturonase NFIA_008150 (378 aa).

An N-terminal signal peptide occupies residues 1-19 (MLKLIGSLVLLASAAEVIA). Positions 20–35 (SPLAESVAPSITLEKR) are excised as a propeptide. Residues Cys38 and Cys56 are joined by a disulfide bond. 3 PbH1 repeats span residues 147–169 (TSSS…SING), 170–200 (CDGL…DIGS), and 201–222 (SSNI…AVNS). Asp215 functions as the Proton donor in the catalytic mechanism. Cys217 and Cys233 are disulfide-bonded. Residue His237 is part of the active site. PbH1 repeat units lie at residues 247–273 (RSDN…RIKA) and 281–303 (IKGI…LIEQ). An N-linked (GlcNAc...) asparagine glycan is attached at Asn254. Asn327 is a glycosylation site (N-linked (GlcNAc...) asparagine). 2 cysteine pairs are disulfide-bonded: Cys345–Cys350 and Cys369–Cys378.

Belongs to the glycosyl hydrolase 28 family.

Its subcellular location is the secreted. The enzyme catalyses (1,4-alpha-D-galacturonosyl)n+m + H2O = (1,4-alpha-D-galacturonosyl)n + (1,4-alpha-D-galacturonosyl)m.. In terms of biological role, involved in maceration and soft-rotting of plant tissue. Hydrolyzes the 1,4-alpha glycosidic bonds of de-esterified pectate in the smooth region of the plant cell wall. The sequence is that of Probable endopolygalacturonase NFIA_008150 from Neosartorya fischeri (strain ATCC 1020 / DSM 3700 / CBS 544.65 / FGSC A1164 / JCM 1740 / NRRL 181 / WB 181) (Aspergillus fischerianus).